A 194-amino-acid chain; its full sequence is Imidazoleglycerol-phosphate dehydratase (194 aa).

Belongs to the imidazoleglycerol-phosphate dehydratase family.

It is found in the cytoplasm. It catalyses the reaction D-erythro-1-(imidazol-4-yl)glycerol 3-phosphate = 3-(imidazol-4-yl)-2-oxopropyl phosphate + H2O. It functions in the pathway amino-acid biosynthesis; L-histidine biosynthesis; L-histidine from 5-phospho-alpha-D-ribose 1-diphosphate: step 6/9. The polypeptide is Imidazoleglycerol-phosphate dehydratase (Thermus thermophilus (strain ATCC BAA-163 / DSM 7039 / HB27)).